We begin with the raw amino-acid sequence, 369 residues long: uncharacterized protein (369 aa).

This is an uncharacterized protein from Caenorhabditis elegans.